Here is a 217-residue protein sequence, read N- to C-terminus: Large ribosomal subunit protein uL1 (217 aa).

It belongs to the universal ribosomal protein uL1 family. In terms of assembly, component of the large ribosomal subunit (LSU). Mature N.crassa ribosomes consist of a small (40S) and a large (60S) subunit. The 40S small subunit contains 1 molecule of ribosomal RNA (18S rRNA) and at least 32 different proteins. The large 60S subunit contains 3 rRNA molecules (26S, 5.8S and 5S rRNA) and at least 42 different proteins. uL1 forms part of the L1 stalk.

The protein localises to the cytoplasm. Its function is as follows. Component of the ribosome, a large ribonucleoprotein complex responsible for the synthesis of proteins in the cell. The small ribosomal subunit (SSU) binds messenger RNAs (mRNAs) and translates the encoded message by selecting cognate aminoacyl-transfer RNA (tRNA) molecules. The large subunit (LSU) contains the ribosomal catalytic site termed the peptidyl transferase center (PTC), which catalyzes the formation of peptide bonds, thereby polymerizing the amino acids delivered by tRNAs into a polypeptide chain. The nascent polypeptides leave the ribosome through a tunnel in the LSU and interact with protein factors that function in enzymatic processing, targeting, and the membrane insertion of nascent chains at the exit of the ribosomal tunnel. uL1 forms part of the L1 stalk, a mobile element that plays a role in evacuating the exit-site tRNA. This is Large ribosomal subunit protein uL1 (crp-74) from Neurospora crassa (strain ATCC 24698 / 74-OR23-1A / CBS 708.71 / DSM 1257 / FGSC 987).